Here is a 115-residue protein sequence, read N- to C-terminus: Large ribosomal subunit protein bL20 (115 aa).

It belongs to the bacterial ribosomal protein bL20 family.

Its function is as follows. Binds directly to 23S ribosomal RNA and is necessary for the in vitro assembly process of the 50S ribosomal subunit. It is not involved in the protein synthesizing functions of that subunit. The sequence is that of Large ribosomal subunit protein bL20 from Prochlorococcus marinus (strain MIT 9312).